We begin with the raw amino-acid sequence, 428 residues long: 3-phosphoshikimate 1-carboxyvinyltransferase (428 aa).

Positions 20, 21, and 25 each coordinate 3-phosphoshikimate. K20 contacts phosphoenolpyruvate. Phosphoenolpyruvate-binding residues include G92 and R120. 3-phosphoshikimate-binding residues include S166, Q168, D314, and K341. Q168 provides a ligand contact to phosphoenolpyruvate. The active-site Proton acceptor is D314. Phosphoenolpyruvate is bound by residues R345 and R387.

This sequence belongs to the EPSP synthase family. Monomer.

Its subcellular location is the cytoplasm. It catalyses the reaction 3-phosphoshikimate + phosphoenolpyruvate = 5-O-(1-carboxyvinyl)-3-phosphoshikimate + phosphate. It participates in metabolic intermediate biosynthesis; chorismate biosynthesis; chorismate from D-erythrose 4-phosphate and phosphoenolpyruvate: step 6/7. Its function is as follows. Catalyzes the transfer of the enolpyruvyl moiety of phosphoenolpyruvate (PEP) to the 5-hydroxyl of shikimate-3-phosphate (S3P) to produce enolpyruvyl shikimate-3-phosphate and inorganic phosphate. In Listeria monocytogenes serovar 1/2a (strain ATCC BAA-679 / EGD-e), this protein is 3-phosphoshikimate 1-carboxyvinyltransferase.